The sequence spans 925 residues: Leucine--tRNA ligase (925 aa).

The 'HIGH' region motif lies at 40–51 (PYPSGAGLHVGH). A 'KMSKS' region motif is present at residues 700-704 (KMSKS). Lys-703 is a binding site for ATP.

Belongs to the class-I aminoacyl-tRNA synthetase family.

Its subcellular location is the cytoplasm. The enzyme catalyses tRNA(Leu) + L-leucine + ATP = L-leucyl-tRNA(Leu) + AMP + diphosphate. The sequence is that of Leucine--tRNA ligase from Porphyromonas gingivalis (strain ATCC 33277 / DSM 20709 / CIP 103683 / JCM 12257 / NCTC 11834 / 2561).